A 1405-amino-acid polypeptide reads, in one-letter code: DNA-directed RNA polymerase III subunit rpc1 (1405 aa).

Residues Cys66, Cys69, Cys76, His79, Cys106, Cys109, and Cys153 each coordinate Zn(2+). Asp493, Asp495, and Asp497 together coordinate Mg(2+). The segment at 838–850 (PTEFLFHAISGRE) is bridging helix.

It belongs to the RNA polymerase beta' chain family. In terms of assembly, component of the RNA polymerase III (Pol III) complex consisting of 17 subunits.

The protein localises to the nucleus. The catalysed reaction is RNA(n) + a ribonucleoside 5'-triphosphate = RNA(n+1) + diphosphate. Functionally, DNA-dependent RNA polymerase catalyzes the transcription of DNA into RNA using the four ribonucleoside triphosphates as substrates. Largest and catalytic core component of RNA polymerase III which synthesizes small RNAs, such as 5S rRNA and tRNAs. Forms the polymerase active center together with the second largest subunit. A single-stranded DNA template strand of the promoter is positioned within the central active site cleft of Pol III. A bridging helix emanates from RPC1 and crosses the cleft near the catalytic site and is thought to promote translocation of Pol III by acting as a ratchet that moves the RNA-DNA hybrid through the active site by switching from straight to bent conformations at each step of nucleotide addition. The sequence is that of DNA-directed RNA polymerase III subunit rpc1 (rpc1) from Schizosaccharomyces pombe (strain 972 / ATCC 24843) (Fission yeast).